The following is a 253-amino-acid chain: Putative B3 domain-containing protein Os03g0619850 (253 aa).

Positions 26–119 form a DNA-binding region, TF-B3; that stretch reads MSCFLIRMTT…CFEVMILDSD (94 aa). 2 disordered regions span residues 126 to 150 and 230 to 253; these read LKSN…AGPP and HRDA…EQDS. Over residues 230-239 the composition is skewed to basic and acidic residues; the sequence is HRDADQERQM.

Its subcellular location is the nucleus. This chain is Putative B3 domain-containing protein Os03g0619850, found in Oryza sativa subsp. japonica (Rice).